A 261-amino-acid chain; its full sequence is tRNA pseudouridine synthase A (261 aa).

The Nucleophile role is filled by Asp-51. Tyr-109 is a binding site for substrate.

It belongs to the tRNA pseudouridine synthase TruA family. As to quaternary structure, homodimer.

It carries out the reaction uridine(38/39/40) in tRNA = pseudouridine(38/39/40) in tRNA. Its function is as follows. Formation of pseudouridine at positions 38, 39 and 40 in the anticodon stem and loop of transfer RNAs. This Shewanella baltica (strain OS185) protein is tRNA pseudouridine synthase A.